The sequence spans 841 residues: Protein translocase subunit SecA (841 aa).

ATP-binding positions include Gln-85, 103–107, and Asp-492; that span reads GEGKT. The tract at residues 790–814 is disordered; sequence IQGQTTAHQPKEGDEEKQAKKKPVR. A compositionally biased stretch (basic and acidic residues) spans 798-807; that stretch reads QPKEGDEEKQ. Cys-825, Cys-827, Cys-836, and Cys-837 together coordinate Zn(2+).

This sequence belongs to the SecA family. As to quaternary structure, monomer and homodimer. Part of the essential Sec protein translocation apparatus which comprises SecA, SecYEG and auxiliary proteins SecDF. Other proteins may also be involved. Requires Zn(2+) as cofactor.

The protein resides in the cell membrane. It is found in the cytoplasm. It carries out the reaction ATP + H2O + cellular proteinSide 1 = ADP + phosphate + cellular proteinSide 2.. Part of the Sec protein translocase complex. Interacts with the SecYEG preprotein conducting channel. Has a central role in coupling the hydrolysis of ATP to the transfer of proteins into and across the cell membrane, serving as an ATP-driven molecular motor driving the stepwise translocation of polypeptide chains across the membrane. In Bacillus licheniformis (strain ATCC 14580 / DSM 13 / JCM 2505 / CCUG 7422 / NBRC 12200 / NCIMB 9375 / NCTC 10341 / NRRL NRS-1264 / Gibson 46), this protein is Protein translocase subunit SecA.